The primary structure comprises 367 residues: MNMKGKALLAGCIALSLSNMAFAKDIKVAVVGAMSGPVAQYGDQEFTGAEQAIADINAKGGVKGDKLVMVKYDDACDPKQAVAVANKVVNDGIKYVIGHLCSSSTQPASDIYEDEGILMITPAATAPELTARGYNLVLRTTGLDSDQGPTAAKYIVEKVKPKRIAIVHDKQQYGEGLARSVQDNLKKANADVVFFDGITAGEKDFSTLVARLKKENIDFVYYGGYHPEMGQILRQARAAGLKTQFMGPEGVANVSLSNIAGESAEGLLVTKPKNYDQVPANKPIVDAIKAKKQDPSGAFVWTTYAALQSLQAGLNQSDDPAEIAKYLKANSVETVMGPLSWDAKGDLKGFEFGVFDWHANGTATDAK.

Positions 1–23 are cleaved as a signal peptide; the sequence is MNMKGKALLAGCIALSLSNMAFA. A disulfide bridge links cysteine 76 with cysteine 101.

The protein belongs to the leucine-binding protein family.

It is found in the periplasm. In terms of biological role, this protein is a component of the leucine, isoleucine, valine, (threonine) transport system, which is one of the two periplasmic binding protein-dependent transport systems of the high-affinity transport of the branched-chain amino acids. This Citrobacter freundii protein is Leu/Ile/Val-binding protein (livJ).